The chain runs to 915 residues: Metabotropic glutamate receptor 7 (915 aa).

The signal sequence occupies residues 1 to 34 (MVQLRKLLRVLTLMKFPCCVLEVLLCALAAAARG). The Extracellular portion of the chain corresponds to 35–590 (QEMYAPHSIR…IIKLEWHSPW (556 aa)). Residues Cys67 and Cys109 are joined by a disulfide bond. An N-linked (GlcNAc...) asparagine glycan is attached at Asn98. Residues Ser159, 180-182 (AST), Tyr230, and Asp314 contribute to the L-glutamate site. Intrachain disulfides connect Cys249–Cys541, Cys374–Cys390, Cys430–Cys437, Cys523–Cys542, Cys527–Cys545, Cys548–Cys560, and Cys563–Cys576. Lys407 is an L-glutamate binding site. Residues Asn458 and Asn486 are each glycosylated (N-linked (GlcNAc...) asparagine). Asn572 carries an N-linked (GlcNAc...) asparagine glycan. The chain crosses the membrane as a helical span at residues 591-615 (AVIPVFLAMLGIIATIFVMATFIRY). Topologically, residues 616–627 (NDTPIVRASGRE) are cytoplasmic. The chain crosses the membrane as a helical span at residues 628–648 (LSYVLLTGIFLCYIITFLMIA). Residues 649-654 (KPDVAV) lie on the Extracellular side of the membrane. The chain crosses the membrane as a helical span at residues 655–675 (CSFRRVFLGLGMCISYAALLT). Residues 676–702 (KTNRIYRIFEQGKKSVTAPRLISPTSQ) are Cytoplasmic-facing. The helical transmembrane segment at 703 to 723 (LAITSSLISVQLLGVFIWFGV) threads the bilayer. At 724–753 (DPPNIIIDYDEHKTMNPEQARGVLKCDITD) the chain is on the extracellular side. Residues 754–775 (LQIICSLGYSILLMVTCTVYAI) form a helical membrane-spanning segment. Topologically, residues 776-788 (KTRGVPENFNEAK) are cytoplasmic. The chain crosses the membrane as a helical span at residues 789-810 (PIGFTMYTTCIVWLAFIPIFFG). Residues 811 to 825 (TAQSAEKLYIQTTTL) lie on the Extracellular side of the membrane. A helical transmembrane segment spans residues 826 to 850 (TISMNLSASVALGMLYMPKVYIIIF). At 851–915 (HPELNVQKRK…KYVSYNNLVI (65 aa)) the chain is on the cytoplasmic side. The interval 874–895 (SRLSHKPSDRPNGEAKTELCEN) is disordered. Residues 879 to 892 (KPSDRPNGEAKTEL) are compositionally biased toward basic and acidic residues. Ser900 is modified (phosphoserine).

Belongs to the G-protein coupled receptor 3 family. In terms of assembly, homodimer. Interacts with PICK1. Post-translationally, N-glycosylated. As to expression, expressed in many areas of the brain, especially in the cerebral cortex, hippocampus, and cerebellum. Expression of GRM7 isoforms in non-neuronal tissues appears to be restricted to isoform 3 and isoform 4.

It is found in the cell membrane. In terms of biological role, G-protein coupled receptor activated by glutamate that regulates axon outgrowth through the MAPK-cAMP-PKA signaling pathway during neuronal development. Ligand binding causes a conformation change that triggers signaling via guanine nucleotide-binding proteins (G proteins) and modulates the activity of downstream effectors, such as adenylate cyclase that it inhibits. The protein is Metabotropic glutamate receptor 7 (GRM7) of Homo sapiens (Human).